A 150-amino-acid chain; its full sequence is Large ribosomal subunit protein uL11 (150 aa).

This sequence belongs to the universal ribosomal protein uL11 family. Part of the ribosomal stalk of the 50S ribosomal subunit. Interacts with L10 and the large rRNA to form the base of the stalk. L10 forms an elongated spine to which L12 dimers bind in a sequential fashion forming a multimeric L10(L12)X complex. One or more lysine residues are methylated.

Forms part of the ribosomal stalk which helps the ribosome interact with GTP-bound translation factors. In Cereibacter sphaeroides (strain KD131 / KCTC 12085) (Rhodobacter sphaeroides), this protein is Large ribosomal subunit protein uL11.